Reading from the N-terminus, the 387-residue chain is MQVLWFIPTHGDSRYLGTSEGAREVSFDYLKQVAVAADTLGYDGVLIPTGRSCEDPWVVASALAAVTRKLRFLVALRPGLMTPTLAARMAATFDRVSNGRLLVNLVTGGDVAELEGDGLFLNHAERYEASAEFIRVWRDLLAASHENGEISFEGKHVTVKGARVLYPPIQRPHPPVYFGGSSEAAHDLAAEQVETYLTWGEPPADVAKKIADVRARAAKHGRTVRFGIRLHVIVRETDAAAWAAADELISKLDDQTVARAQAVFAKMDSEGQRRMAALHAGGTRRTREALEISPNLWAGVGLVRGGAGTALVGDPKTVAARIEEYAALGIDTFVLSGYPHLEEAYRFAELVFPLLPRKVRDKLPGQVLSGPFGEVMATGIVPIASQS.

This sequence belongs to the SsuD family.

The enzyme catalyses an alkanesulfonate + FMNH2 + O2 = an aldehyde + FMN + sulfite + H2O + 2 H(+). In terms of biological role, catalyzes the desulfonation of aliphatic sulfonates. The polypeptide is Alkanesulfonate monooxygenase (Cupriavidus metallidurans (strain ATCC 43123 / DSM 2839 / NBRC 102507 / CH34) (Ralstonia metallidurans)).